The sequence spans 805 residues: Polyribonucleotide nucleotidyltransferase (805 aa).

Asp-491 and Asp-497 together coordinate Mg(2+). Residues 558 to 617 form the KH domain; it reads PRMESMIIDKNKIKNVIGTGGKNVREICEKTGVKIEISQDGTVMIYAVSRDAVEEAKNMI. In terms of domain architecture, S1 motif spans 627–694; that stretch reads GKVFSGVISE…DKDHVQLSMR (68 aa). The disordered stretch occupies residues 702–805; that stretch reads DLLEHESYSS…GGGNKKPRFF (104 aa).

Belongs to the polyribonucleotide nucleotidyltransferase family. Requires Mg(2+) as cofactor.

It localises to the cytoplasm. The enzyme catalyses RNA(n+1) + phosphate = RNA(n) + a ribonucleoside 5'-diphosphate. Its function is as follows. Involved in mRNA degradation. Catalyzes the phosphorolysis of single-stranded polyribonucleotides processively in the 3'- to 5'-direction. The chain is Polyribonucleotide nucleotidyltransferase from Anaplasma marginale (strain Florida).